The following is a 249-amino-acid chain: tRNA (guanine-N(1)-)-methyltransferase (249 aa).

S-adenosyl-L-methionine is bound by residues G113 and L133–L138.

This sequence belongs to the RNA methyltransferase TrmD family. Homodimer.

The protein localises to the cytoplasm. The enzyme catalyses guanosine(37) in tRNA + S-adenosyl-L-methionine = N(1)-methylguanosine(37) in tRNA + S-adenosyl-L-homocysteine + H(+). Specifically methylates guanosine-37 in various tRNAs. The chain is tRNA (guanine-N(1)-)-methyltransferase from Leptothrix cholodnii (strain ATCC 51168 / LMG 8142 / SP-6) (Leptothrix discophora (strain SP-6)).